A 323-amino-acid chain; its full sequence is ATP synthase gamma chain (323 aa).

Belongs to the ATPase gamma chain family. As to quaternary structure, F-type ATPases have 2 components, CF(1) - the catalytic core - and CF(0) - the membrane proton channel. CF(1) has five subunits: alpha(3), beta(3), gamma(1), delta(1), epsilon(1). CF(0) has three main subunits: a, b and c.

The protein resides in the cell inner membrane. Its function is as follows. Produces ATP from ADP in the presence of a proton gradient across the membrane. The gamma chain is believed to be important in regulating ATPase activity and the flow of protons through the CF(0) complex. The polypeptide is ATP synthase gamma chain (Rickettsia peacockii (strain Rustic)).